Reading from the N-terminus, the 421-residue chain is Caspase-12 (421 aa).

Residues 1–92 enclose the CARD domain; sequence MADKKPSKED…QLSLEYQHES (92 aa). Ser-85 is modified (phosphoserine). A disordered region spans residues 88 to 131; it reads YQHESEDQESEESSASSSSSTESEEENEESKDEERAASAHSMAV. The span at 109–118 shows a compositional bias: acidic residues; sequence ESEEENEESK. Residues His-252 and Cys-300 contribute to the active site.

It belongs to the peptidase C14A family. Heterotetramer that consists of two anti-parallel arranged heterodimers, each one formed by two subunits (Potential). May interact with TRAF2.

In terms of biological role, involved in the activation cascade of caspases responsible for apoptosis execution. This chain is Caspase-12, found in Macaca mulatta (Rhesus macaque).